A 358-amino-acid polypeptide reads, in one-letter code: MSEKMYATLKTAEKIFSEISSVITKQEGLEILNGSIPLTTCLDKAFQERNRYFYNKVRIHILDNIKNGYCPEDCGYCAQRKNANSGIKEYPMKSEAEIYEDAVQAKKNGAYRFCMVTSGTGPNRLTTERLASTIRRITNELGMKVCLSAGLLDEEKAQVLKSAGLDRYNHNLNTSENHYPEICDTHTYAQRTQTLDSVSKAGIGMCSGVIVGMGESFQDIVDMAFELKSFRVISIPVNFFIPVKGHAIKNPGILTPELCVRILCLFRLVNPDSEIRIAAGREGHLRSLSAMALFAANSLFSSGYLNVKGSEIIETVTMIRDAGFVPELVDGGILPEESGTEMLYSEKNFPELYKFKKS.

Residues 55 to 278 (NKVRIHILDN…VNPDSEIRIA (224 aa)) form the Radical SAM core domain. Residues C70, C74, and C77 each contribute to the [4Fe-4S] cluster site. [2Fe-2S] cluster is bound by residues C114, C146, C206, and R276.

This sequence belongs to the radical SAM superfamily. Biotin synthase family. In terms of assembly, homodimer. The cofactor is [4Fe-4S] cluster. [2Fe-2S] cluster serves as cofactor.

The enzyme catalyses (4R,5S)-dethiobiotin + (sulfur carrier)-SH + 2 reduced [2Fe-2S]-[ferredoxin] + 2 S-adenosyl-L-methionine = (sulfur carrier)-H + biotin + 2 5'-deoxyadenosine + 2 L-methionine + 2 oxidized [2Fe-2S]-[ferredoxin]. Its pathway is cofactor biosynthesis; biotin biosynthesis; biotin from 7,8-diaminononanoate: step 2/2. Its function is as follows. Catalyzes the conversion of dethiobiotin (DTB) to biotin by the insertion of a sulfur atom into dethiobiotin via a radical-based mechanism. The polypeptide is Biotin synthase (Leptospira borgpetersenii serovar Hardjo-bovis (strain JB197)).